A 235-amino-acid polypeptide reads, in one-letter code: Alpha-S2-casein (235 aa).

The first 15 residues, 1–15 (MKFFIFTCLLAVAFA), serve as a signal peptide directing secretion. 12 positions are modified to phosphoserine: serine 23, serine 24, serine 25, serine 28, serine 47, serine 72, serine 73, serine 74, serine 77, serine 147, serine 149, and serine 168. Residues 144–158 (EELSTSEEPVSSSQE) show a composition bias toward polar residues. The interval 144–163 (EELSTSEEPVSSSQEENTKT) is disordered.

The protein belongs to the alpha-casein family. As to expression, mammary gland specific. Secreted in milk.

The protein resides in the secreted. Important role in the capacity of milk to transport calcium phosphate. The polypeptide is Alpha-S2-casein (CSN1S2) (Sus scrofa (Pig)).